The chain runs to 130 residues: Cytochrome b-c1 complex subunit 7 (130 aa).

This sequence belongs to the UQCRB/QCR7 family. As to quaternary structure, component of the ubiquinol-cytochrome c oxidoreductase (cytochrome b-c1 complex, complex III, CIII), a multisubunit enzyme composed of 3 respiratory subunits cytochrome b, cytochrome c1 and Rieske protein, 2 core protein subunits, and additional low-molecular weight protein subunits. The complex exists as an obligatory dimer and forms supercomplexes (SCs) in the inner mitochondrial membrane with cytochrome c oxidase (complex IV, CIV).

The protein localises to the mitochondrion inner membrane. Component of the ubiquinol-cytochrome c oxidoreductase, a multisubunit transmembrane complex that is part of the mitochondrial electron transport chain which drives oxidative phosphorylation. The respiratory chain contains 3 multisubunit complexes succinate dehydrogenase (complex II, CII), ubiquinol-cytochrome c oxidoreductase (cytochrome b-c1 complex, complex III, CIII) and cytochrome c oxidase (complex IV, CIV), that cooperate to transfer electrons derived from NADH and succinate to molecular oxygen, creating an electrochemical gradient over the inner membrane that drives transmembrane transport and the ATP synthase. The cytochrome b-c1 complex catalyzes electron transfer from ubiquinol to cytochrome c, linking this redox reaction to translocation of protons across the mitochondrial inner membrane, with protons being carried across the membrane as hydrogens on the quinol. In the process called Q cycle, 2 protons are consumed from the matrix, 4 protons are released into the intermembrane space and 2 electrons are passed to cytochrome c. The protein is Cytochrome b-c1 complex subunit 7 of Schistosoma mansoni (Blood fluke).